Reading from the N-terminus, the 3341-residue chain is Genome polyprotein (3341 aa).

Composition is skewed to basic and acidic residues over residues 1–14 and 24–35; these read MKRK…KAPG and REGRRKDKDKGG. The disordered stretch occupies residues 1–57; sequence MKRKDLEARGKAPGRDSSTPFWGREGRRKDKDKGGESPSNRQVTLKTPIQSGRRAGK. Residues 1-120 lie on the Cytoplasmic side of the membrane; that stretch reads MKRKDLEARG…LESRRTTGNP (120 aa). Positions 37–50 are enriched in polar residues; sequence SPSNRQVTLKTPIQ. Residues 55-97 form a hydrophobic; homodimerization of capsid protein C region; it reads AGKRQRVGLLGRLGVGWGSFLQEDIVQALIHMALVLHALFASI. The propeptide at 117–136 is ER anchor for the capsid protein C, removed in mature form by serine protease NS3; that stretch reads TGNPMTLAFILGFLTVLCGC. The chain crosses the membrane as a helical span at residues 121–141; sequence MTLAFILGFLTVLCGCVVIDM. Topologically, residues 142–245 are extracellular; sequence QVSTTRGTEI…AFKTIRENKT (104 aa). N-linked (GlcNAc...) asparagine; by host glycans are attached at residues Asn157 and Asn243. A helical transmembrane segment spans residues 246-262; that stretch reads IFIVALLCVAIAKRWPT. Residue Trp263 is a topological domain, cytoplasmic. The chain crosses the membrane as a helical span at residues 264 to 278; that stretch reads VVILLAIGTWTTVKG. The Extracellular portion of the chain corresponds to 279 to 665; it reads EFVEPLYTLK…GVWQDLVGKF (387 aa). N-linked (GlcNAc...) asparagine; by host glycosylation occurs at Asn339. The interval 371–384 is involved in fusion; the sequence is NRGWGTGCFKWGIG. N-linked (GlcNAc...) asparagine; by host glycosylation is found at Asn399, Asn411, Asn575, and Asn611. The chain crosses the membrane as a helical span at residues 666–686; it reads SVGAFFSNTALLVILVLAALI. Topologically, residues 687 to 689 are cytoplasmic; the sequence is DKR. A helical membrane pass occupies residues 690-705; that stretch reads IAFLLVLGGYFYYVRA. The Extracellular segment spans residues 706-1138; sequence DLGCGIDTTR…AKTRTSTLTR (433 aa). Residues Asn794, Asn896, Asn993, and Asn1027 are each glycosylated (N-linked (GlcNAc...) asparagine; by host). A helical membrane pass occupies residues 1139 to 1159; it reads LFLTILAMALFGLPNLFSSVG. At 1160 to 1178 the chain is on the cytoplasmic side; that stretch reads LSAWVLLVASSSAQPQDLS. A helical membrane pass occupies residues 1179–1199; the sequence is MNLWIVLQTGSSAVLLLGYMI. The Lumenal segment spans residues 1200-1204; that stretch reads RRKLA. A helical membrane pass occupies residues 1205-1225; it reads MVLGVHHLVTLMCVQFLFSAV. Residues 1226–1231 lie on the Cytoplasmic side of the membrane; that stretch reads DRYQKY. The chain crosses the membrane as a helical span at residues 1232–1252; it reads LYGLLELMASVVLLSAYKSVL. The Lumenal segment spans residues 1253–1261; sequence QALPPEVLC. Residues 1262-1282 form a helical membrane-spanning segment; sequence FSLVMGWKTALSLATVVFLIF. Over 1283–1303 the chain is Cytoplasmic; sequence SLNAMYKYACQYHNPRNGYRD. A helical membrane pass occupies residues 1304 to 1324; it reads SGANLWFWTVSLASAGGIWAA. At 1325–1326 the chain is on the lumenal side; it reads EK. Residues 1327 to 1347 traverse the membrane as a helical segment; that stretch reads AHQPTVAAVLAFTMVVLFLYM. Residues 1348-1403 lie on the Cytoplasmic side of the membrane; it reads EQTNVSMELEFISAGETPEGVSTENDDGINIPDLKGRYGEDGIVVGAASSSGYLPE. The helical intramembrane region spans 1404–1424; the sequence is LVFVFLLGFAVTSTSYFLGAL. At 1425-2089 the chain is on the cytoplasmic side; that stretch reads YLLIATSTNL…TERSLTVVMA (665 aa). One can recognise a Peptidase S7 domain in the interval 1452 to 1630; the sequence is SDDLLGLGGP…KPTDVTESLN (179 aa). Residues His1506, Asp1530, and Ser1589 each act as charge relay system; for serine protease NS3 activity in the active site. In terms of domain architecture, Helicase ATP-binding spans 1627–1780; the sequence is ESLNCDSTRR…SNYAISDQSI (154 aa). An ATP-binding site is contributed by 1640 to 1647; that stretch reads WHPGKGKT. The short motif at 1729 to 1732 is the DECH box element; the sequence is DECH. Residues 1793-1947 form the Helicase C-terminal domain; the sequence is NVQKSVGAKK…TFMLEEAAYS (155 aa). A helical membrane pass occupies residues 2090–2110; the sequence is FVLGVSIMLSCFIAVWALCFL. Residues 2111-2145 lie on the Lumenal side of the membrane; sequence FSLFRPKKATYEQMPSSDPLSGGVLVSTPSVLYCM. Residues 2146–2166 form a helical membrane-spanning segment; it reads GVPLGFCVVITLAMFLVYPVL. The Cytoplasmic portion of the chain corresponds to 2167-2178; it reads YKSIGNRSYMDS. Residues 2179–2199 traverse the membrane as a helical segment; sequence DLVKWVILGSCLICGVLAWEM. The Lumenal segment spans residues 2200-2242; it reads RMFPNIRSDLMELVKAVKEPEEVVNSGPSFPSWEIAQGKGATM. A helical transmembrane segment spans residues 2243 to 2263; it reads LDSLQVFFFITVLSTKFLYWF. Over 2264-2302 the chain is Cytoplasmic; that stretch reads QENWTARMYAMKHPEMVSSIGGFRFDEIPFRAVLPSGFA. The segment at residues 2303–2323 is an intramembrane region (helical); it reads IVAIASLPSVVVGLLAAGVFM. Topologically, residues 2324–2366 are cytoplasmic; it reads AIMYCQNKWNATPKILTALDARDQRHDRPTEITSRVPLENTRS. A helical membrane pass occupies residues 2367–2387; that stretch reads IMYAFCLIFSLFWAFCTRSPG. Residues 2388-2412 are Lumenal-facing; sequence DFLRGSLVVGASMWQILHPRSKIHD. The helical transmembrane segment at 2413 to 2433 threads the bilayer; it reads VMDFGSMVSAIGLLEMNYLFY. Over 2434–3341 the chain is Cytoplasmic; sequence RFMHIAARAL…SRYRRGNDVI (908 aa). The region spanning 2454-2706 is the mRNA cap 0-1 NS5-type MT domain; sequence ALEKSTTIGL…SPVLPKGTRA (253 aa). Residue Ser2497 coordinates S-adenosyl-L-methionine. Lys2509 serves as the catalytic For 2'-O-MTase activity. S-adenosyl-L-methionine-binding residues include Gly2527, Trp2528, Thr2545, Ile2546, Asp2572, and Val2573. Asp2587 acts as the For 2'-O-MTase activity in catalysis. Ile2588 is a binding site for S-adenosyl-L-methionine. Catalysis depends on for 2'-O-MTase activity residues Lys2624 and Glu2660. Tyr2662 serves as a coordination point for S-adenosyl-L-methionine. Zn(2+) contacts are provided by Glu2881, His2885, Cys2890, and Cys2893. The 148-residue stretch at 2970 to 3117 folds into the RdRp catalytic domain; the sequence is KYLIADDIAG…STDNRDFSSA (148 aa). Zn(2+) contacts are provided by His3152, Cys3168, and Cys3287.

In the N-terminal section; belongs to the class I-like SAM-binding methyltransferase superfamily. mRNA cap 0-1 NS5-type methyltransferase family. Homodimer. As to quaternary structure, forms heterodimers with envelope protein E in the endoplasmic reticulum and Golgi. In terms of assembly, homodimer; in the endoplasmic reticulum and Golgi. Forms homodimers as well as homohexamers. NS1 may interact with NS4A. As to quaternary structure, forms a heterodimer with serine protease NS3. May form homooligomers. In terms of assembly, forms a heterodimer with NS2B. Interacts with NS4B. Interacts with unphosphorylated RNA-directed RNA polymerase NS5; this interaction stimulates RNA-directed RNA polymerase NS5 guanylyltransferase activity. Interacts with serine protease NS3. As to quaternary structure, interacts with host STAT2; this interaction inhibits the phosphorylation of the latter, and, when all viral proteins are present (polyprotein), targets STAT2 for degradation. Genome polyprotein: Specific enzymatic cleavages in vivo yield mature proteins. Cleavages in the lumen of endoplasmic reticulum are performed by host signal peptidase, whereas cleavages in the cytoplasmic side are performed by serine protease NS3. Signal cleavage at the 2K-4B site requires a prior NS3 protease-mediated cleavage at the 4A-2K site. Post-translationally, cleaved in post-Golgi vesicles by a host furin, releasing the mature small envelope protein M, and peptide pr. This cleavage is incomplete as up to 30% of viral particles still carry uncleaved prM. In terms of processing, N-glycosylated. N-glycosylated. The excreted form is glycosylated and this is required for efficient secretion of the protein from infected cells. Post-translationally, phosphorylated on serines residues. This phosphorylation may trigger NS5 nuclear localization.

It localises to the virion. The protein localises to the host nucleus. It is found in the secreted. Its subcellular location is the virion membrane. The protein resides in the host endoplasmic reticulum membrane. It carries out the reaction Selective hydrolysis of -Xaa-Xaa-|-Yaa- bonds in which each of the Xaa can be either Arg or Lys and Yaa can be either Ser or Ala.. It catalyses the reaction RNA(n) + a ribonucleoside 5'-triphosphate = RNA(n+1) + diphosphate. The enzyme catalyses a ribonucleoside 5'-triphosphate + H2O = a ribonucleoside 5'-diphosphate + phosphate + H(+). The catalysed reaction is ATP + H2O = ADP + phosphate + H(+). It carries out the reaction a 5'-end (5'-triphosphoguanosine)-ribonucleoside in mRNA + S-adenosyl-L-methionine = a 5'-end (N(7)-methyl 5'-triphosphoguanosine)-ribonucleoside in mRNA + S-adenosyl-L-homocysteine. It catalyses the reaction a 5'-end (N(7)-methyl 5'-triphosphoguanosine)-ribonucleoside in mRNA + S-adenosyl-L-methionine = a 5'-end (N(7)-methyl 5'-triphosphoguanosine)-(2'-O-methyl-ribonucleoside) in mRNA + S-adenosyl-L-homocysteine + H(+). Functionally, plays a role in virus budding by binding to the cell membrane and gathering the viral RNA into a nucleocapsid that forms the core of a mature virus particle. During virus entry, may induce genome penetration into the host cytoplasm after hemifusion induced by the surface proteins. Can migrate to the cell nucleus where it modulates host functions. In terms of biological role, prevents premature fusion activity of envelope proteins in trans-Golgi by binding to envelope protein E at pH6.0. After virion release in extracellular space, gets dissociated from E dimers. Its function is as follows. Acts as a chaperone for envelope protein E during intracellular virion assembly by masking and inactivating envelope protein E fusion peptide. prM is the only viral peptide matured by host furin in the trans-Golgi network probably to avoid catastrophic activation of the viral fusion activity in acidic Golgi compartment prior to virion release. prM-E cleavage is inefficient, and many virions are only partially matured. These uncleaved prM would play a role in immune evasion. May play a role in virus budding. Exerts cytotoxic effects by activating a mitochondrial apoptotic pathway through M ectodomain. May display a viroporin activity. Functionally, binds to host cell surface receptor and mediates fusion between viral and cellular membranes. Envelope protein is synthesized in the endoplasmic reticulum in the form of heterodimer with protein prM. They play a role in virion budding in the ER, and the newly formed immature particle is covered with 60 spikes composed of heterodimer between precursor prM and envelope protein E. The virion is transported to the Golgi apparatus where the low pH causes dissociation of PrM-E heterodimers and formation of E homodimers. prM-E cleavage is inefficient, and many virions are only partially matured. These uncleaved prM would play a role in immune evasion. In terms of biological role, involved in immune evasion, pathogenesis and viral replication. Once cleaved off the polyprotein, is targeted to three destinations: the viral replication cycle, the plasma membrane and the extracellular compartment. May play a role in viral genome replication. Assist membrane bending and envelopment of genomic RNA at the endoplasmic reticulum. Excreted as a hexameric lipoparticle that plays a role against host immune response. Its function is as follows. Component of the viral RNA replication complex that functions in virion assembly and antagonizes the host immune response. Required cofactor for the serine protease function of NS3. May have membrane-destabilizing activity and form viroporins. Functionally, displays three enzymatic activities: serine protease, NTPase and RNA helicase. NS3 serine protease, in association with NS2B, performs its autocleavage and cleaves the polyprotein at dibasic sites in the cytoplasm: C-prM, NS2A-NS2B, NS2B-NS3, NS3-NS4A, NS4A-2K and NS4B-NS5. NS3 RNA helicase binds RNA and unwinds dsRNA in the 3' to 5' direction. In terms of biological role, regulates the ATPase activity of the NS3 helicase activity. NS4A allows NS3 helicase to conserve energy during unwinding. Its function is as follows. Functions as a signal peptide for NS4B and is required for the interferon antagonism activity of the latter. Inhibits interferon (IFN)-induced host STAT1 phosphorylation and nuclear translocation, thereby preventing the establishment of a cellular antiviral state by blocking the IFN-alpha/beta pathway. Functionally, replicates the viral (+) and (-) RNA genome, and performs the capping of genomes in the cytoplasm. NS5 methylates viral RNA cap at guanine N-7 and ribose 2'-O positions. Besides its role in RNA genome replication, also prevents the establishment of cellular antiviral state by blocking the interferon-alpha/beta (IFN-alpha/beta) signaling pathway. Inhibits host TYK2 and STAT2 phosphorylation, thereby preventing activation of JAK-STAT signaling pathway. This is Genome polyprotein from Aedes (CFA flavivirus).